A 119-amino-acid chain; its full sequence is Immunoglobulin heavy variable 3-15 (119 aa).

The first 19 residues, 1–19 (MEFGLSWIFLAAILKGVQC), serve as a signal peptide directing secretion. Positions 20 to 44 (EVQLVESGGGLVKPGGSLRLSCAAS) are framework-1. Residues 20–119 (EVQLVESGGG…EDTAVYYCTT (100 aa)) form the Ig-like domain. Cysteine 41 and cysteine 117 are joined by a disulfide. Residues 45–52 (GFTFSNAW) form a complementarity-determining-1 region. A framework-2 region spans residues 53–69 (MSWVRQAPGKGLEWVGR). Positions 70–79 (IKSKTDGGTT) are complementarity-determining-2. The interval 80–117 (DYAAPVKGRFTISRDDSKNTLYLQMNSLKTEDTAVYYC) is framework-3. Residues 118 to 119 (TT) form a complementarity-determining-3 region.

Immunoglobulins are composed of two identical heavy chains and two identical light chains; disulfide-linked.

The protein localises to the secreted. It is found in the cell membrane. In terms of biological role, v region of the variable domain of immunoglobulin heavy chains that participates in the antigen recognition. Immunoglobulins, also known as antibodies, are membrane-bound or secreted glycoproteins produced by B lymphocytes. In the recognition phase of humoral immunity, the membrane-bound immunoglobulins serve as receptors which, upon binding of a specific antigen, trigger the clonal expansion and differentiation of B lymphocytes into immunoglobulins-secreting plasma cells. Secreted immunoglobulins mediate the effector phase of humoral immunity, which results in the elimination of bound antigens. The antigen binding site is formed by the variable domain of one heavy chain, together with that of its associated light chain. Thus, each immunoglobulin has two antigen binding sites with remarkable affinity for a particular antigen. The variable domains are assembled by a process called V-(D)-J rearrangement and can then be subjected to somatic hypermutations which, after exposure to antigen and selection, allow affinity maturation for a particular antigen. This chain is Immunoglobulin heavy variable 3-15, found in Homo sapiens (Human).